Reading from the N-terminus, the 269-residue chain is uncharacterized protein (269 aa).

This is an uncharacterized protein from Escherichia coli (strain K12).